A 211-amino-acid polypeptide reads, in one-letter code: Molybdenum cofactor guanylyltransferase (211 aa).

GTP contacts are provided by residues 12 to 14 (LAG), Lys-25, Asn-53, Asp-71, and Asp-101. Asp-101 lines the Mg(2+) pocket.

This sequence belongs to the MobA family. Monomer. Requires Mg(2+) as cofactor.

The protein localises to the cytoplasm. The catalysed reaction is Mo-molybdopterin + GTP + H(+) = Mo-molybdopterin guanine dinucleotide + diphosphate. In terms of biological role, transfers a GMP moiety from GTP to Mo-molybdopterin (Mo-MPT) cofactor (Moco or molybdenum cofactor) to form Mo-molybdopterin guanine dinucleotide (Mo-MGD) cofactor. The polypeptide is Molybdenum cofactor guanylyltransferase (Acidovorax ebreus (strain TPSY) (Diaphorobacter sp. (strain TPSY))).